The primary structure comprises 211 residues: ATP phosphoribosyltransferase (211 aa).

It belongs to the ATP phosphoribosyltransferase family. Short subfamily. As to quaternary structure, heteromultimer composed of HisG and HisZ subunits.

The protein localises to the cytoplasm. The enzyme catalyses 1-(5-phospho-beta-D-ribosyl)-ATP + diphosphate = 5-phospho-alpha-D-ribose 1-diphosphate + ATP. It participates in amino-acid biosynthesis; L-histidine biosynthesis; L-histidine from 5-phospho-alpha-D-ribose 1-diphosphate: step 1/9. Its function is as follows. Catalyzes the condensation of ATP and 5-phosphoribose 1-diphosphate to form N'-(5'-phosphoribosyl)-ATP (PR-ATP). Has a crucial role in the pathway because the rate of histidine biosynthesis seems to be controlled primarily by regulation of HisG enzymatic activity. The protein is ATP phosphoribosyltransferase of Sorangium cellulosum (strain So ce56) (Polyangium cellulosum (strain So ce56)).